The primary structure comprises 368 residues: G-protein coupled receptor 62 (368 aa).

Over Met-1 to Leu-18 the chain is Extracellular. N-linked (GlcNAc...) asparagine glycans are attached at residues Asn-3 and Asn-8. The helical transmembrane segment at Ile-19–Val-39 threads the bilayer. Residues Leu-40–His-53 lie on the Cytoplasmic side of the membrane. A helical transmembrane segment spans residues Leu-54–Pro-74. The Extracellular portion of the chain corresponds to Pro-75 to Ala-91. Residues Arg-92–Ala-112 traverse the membrane as a helical segment. Residues Arg-113–Pro-129 are Cytoplasmic-facing. Residues Val-130–Gly-150 traverse the membrane as a helical segment. Residues Thr-151–Ala-177 lie on the Extracellular side of the membrane. A helical transmembrane segment spans residues Leu-178–Val-198. The Cytoplasmic segment spans residues Ala-199–Ala-239. Residues Ala-240 to Ala-260 traverse the membrane as a helical segment. The Extracellular portion of the chain corresponds to Cys-261–Glu-272. The helical transmembrane segment at Ala-273–Leu-293 threads the bilayer. Over Gln-294–Ser-368 the chain is Cytoplasmic. The segment at Arg-332 to Ser-368 is disordered.

It belongs to the G-protein coupled receptor 1 family. As to quaternary structure, homodimers. Forms heterodimer with MTNR1B. Interacts with ARRB1 and ARRB2 in a spontaneous and agonist-independent manner; leading to the internalization of GPR62 in the endosomal compartment. In terms of tissue distribution, expressed in brain; detected in the basal forebrain, frontal cortex, caudate, putamen, thalamus and hippocampus.

The protein resides in the cell membrane. Its subcellular location is the endosome membrane. Functionally, orphan G-protein coupled receptor. Constitutively activates the G(q/11)/inositol phosphate and the G(s)-alpha/cAMP signaling pathways. Has spontaneous activity for beta-arrestin recruitment. Shows a reciprocal modulation of signaling functions with the melatonin receptor MTNR1B most likely through receptor heteromerization. This Homo sapiens (Human) protein is G-protein coupled receptor 62 (GPR62).